The following is a 69-amino-acid chain: Large ribosomal subunit protein bL28 (69 aa).

This sequence belongs to the bacterial ribosomal protein bL28 family.

This is Large ribosomal subunit protein bL28 from Oleidesulfovibrio alaskensis (strain ATCC BAA-1058 / DSM 17464 / G20) (Desulfovibrio alaskensis).